A 117-amino-acid chain; its full sequence is Large ribosomal subunit protein bL20 (117 aa).

It belongs to the bacterial ribosomal protein bL20 family.

Binds directly to 23S ribosomal RNA and is necessary for the in vitro assembly process of the 50S ribosomal subunit. It is not involved in the protein synthesizing functions of that subunit. The sequence is that of Large ribosomal subunit protein bL20 from Ruminiclostridium cellulolyticum (strain ATCC 35319 / DSM 5812 / JCM 6584 / H10) (Clostridium cellulolyticum).